The sequence spans 138 residues: ATP synthase epsilon chain (138 aa).

It belongs to the ATPase epsilon chain family. As to quaternary structure, F-type ATPases have 2 components, CF(1) - the catalytic core - and CF(0) - the membrane proton channel. CF(1) has five subunits: alpha(3), beta(3), gamma(1), delta(1), epsilon(1). CF(0) has three main subunits: a, b and c.

The protein resides in the cell inner membrane. Functionally, produces ATP from ADP in the presence of a proton gradient across the membrane. The protein is ATP synthase epsilon chain of Cupriavidus necator (strain ATCC 17699 / DSM 428 / KCTC 22496 / NCIMB 10442 / H16 / Stanier 337) (Ralstonia eutropha).